Here is a 242-residue protein sequence, read N- to C-terminus: Probable transcriptional regulatory protein NMB1648 (242 aa).

Belongs to the TACO1 family.

It localises to the cytoplasm. This Neisseria meningitidis serogroup B (strain ATCC BAA-335 / MC58) protein is Probable transcriptional regulatory protein NMB1648.